We begin with the raw amino-acid sequence, 312 residues long: Olfactory receptor 8H3 (312 aa).

The Extracellular segment spans residues 1-26; that stretch reads MMGRRNDTNVADFILTGLSDSEEVQM. N-linked (GlcNAc...) asparagine glycosylation occurs at Asn-6. A helical membrane pass occupies residues 27–47; it reads ALFMLFLLIYLITMLGNVGML. Residues 48–55 are Cytoplasmic-facing; the sequence is LIIRLDLQ. The chain crosses the membrane as a helical span at residues 56–76; that stretch reads LHTPMYFFLTHLSFIDLSYST. At 77-99 the chain is on the extracellular side; it reads VVTPKTLANLLTSNYISFTGCFA. Cys-97 and Cys-189 are oxidised to a cystine. A helical membrane pass occupies residues 100-120; sequence QMFCFVFLGTAECYLLSSMAY. Topologically, residues 121–139 are cytoplasmic; the sequence is DRYAAICSPLHYTVIMPKR. The helical transmembrane segment at 140–160 threads the bilayer; sequence LCLALITGPYVIGFMDSFVNV. The Extracellular segment spans residues 161-197; it reads VSMSRLHFCDSNIIHHFFCDTSPILALSCTDTDNTEM. The helical transmembrane segment at 198–217 threads the bilayer; the sequence is LIFIIAGSTLMVSLITISAS. The Cytoplasmic portion of the chain corresponds to 218 to 237; that stretch reads YVSILSTILKINSTSGKQKA. A helical transmembrane segment spans residues 238-258; sequence FSTCVSHLLGVTIFYGTMIFT. Over 259–271 the chain is Extracellular; the sequence is YLKPRKSYSLGRD. A helical transmembrane segment spans residues 272 to 292; that stretch reads QVAPVFYTIVIPMLNPLIYSL. Residues 293–312 are Cytoplasmic-facing; sequence RNREVKNALIRVMQRRQDSR.

It belongs to the G-protein coupled receptor 1 family.

The protein localises to the cell membrane. Odorant receptor. The protein is Olfactory receptor 8H3 (OR8H3) of Homo sapiens (Human).